The sequence spans 271 residues: NADPH-dependent 7-cyano-7-deazaguanine reductase (271 aa).

81–83 (IES) is a binding site for substrate. 83-84 (SK) contacts NADPH. C177 acts as the Thioimide intermediate in catalysis. D184 acts as the Proton donor in catalysis. 216-217 (HE) provides a ligand contact to substrate. NADPH is bound at residue 245-246 (RG).

Belongs to the GTP cyclohydrolase I family. QueF type 2 subfamily. In terms of assembly, homodimer.

It localises to the cytoplasm. It catalyses the reaction 7-aminomethyl-7-carbaguanine + 2 NADP(+) = 7-cyano-7-deazaguanine + 2 NADPH + 3 H(+). Its pathway is tRNA modification; tRNA-queuosine biosynthesis. Its function is as follows. Catalyzes the NADPH-dependent reduction of 7-cyano-7-deazaguanine (preQ0) to 7-aminomethyl-7-deazaguanine (preQ1). This chain is NADPH-dependent 7-cyano-7-deazaguanine reductase, found in Xanthomonas axonopodis pv. citri (strain 306).